The chain runs to 699 residues: Elongation factor G (699 aa).

Residues 8–283 (EHIRNIGICA…AVVDFLPSPI (276 aa)) enclose the tr-type G domain. Residues 17–24 (AHIDAGKT), 81–85 (DTPGH), and 135–138 (NKMD) contribute to the GTP site.

This sequence belongs to the TRAFAC class translation factor GTPase superfamily. Classic translation factor GTPase family. EF-G/EF-2 subfamily.

Its subcellular location is the cytoplasm. Catalyzes the GTP-dependent ribosomal translocation step during translation elongation. During this step, the ribosome changes from the pre-translocational (PRE) to the post-translocational (POST) state as the newly formed A-site-bound peptidyl-tRNA and P-site-bound deacylated tRNA move to the P and E sites, respectively. Catalyzes the coordinated movement of the two tRNA molecules, the mRNA and conformational changes in the ribosome. This Rickettsia africae (strain ESF-5) protein is Elongation factor G.